The chain runs to 253 residues: E3 ubiquitin-protein ligase MARCHF3 (253 aa).

The RING-CH-type zinc-finger motif lies at 63 to 123; that stretch reads SPFNDRPMCR…ELCHFRFAVE (61 aa). Zn(2+) contacts are provided by Cys-71, Cys-74, Cys-87, Cys-89, His-97, Cys-100, Cys-113, and Cys-116. 2 consecutive transmembrane segments (helical) span residues 145 to 165 and 182 to 202; these read LFGD…SGWL and AVGL…WTLV. Phosphoserine occurs at positions 237 and 243.

As to quaternary structure, interacts with MARCHF2 and STX6.

The protein localises to the cytoplasmic vesicle membrane. It is found in the early endosome membrane. The catalysed reaction is S-ubiquitinyl-[E2 ubiquitin-conjugating enzyme]-L-cysteine + [acceptor protein]-L-lysine = [E2 ubiquitin-conjugating enzyme]-L-cysteine + N(6)-ubiquitinyl-[acceptor protein]-L-lysine.. Its pathway is protein modification; protein ubiquitination. E3 ubiquitin-protein ligase which may be involved in endosomal trafficking. E3 ubiquitin ligases accept ubiquitin from an E2 ubiquitin-conjugating enzyme in the form of a thioester and then directly transfer the ubiquitin to targeted substrates. The protein is E3 ubiquitin-protein ligase MARCHF3 of Homo sapiens (Human).